A 257-amino-acid polypeptide reads, in one-letter code: Alkaline phosphatase synthesis transcriptional regulatory protein SphR (257 aa).

The Response regulatory domain occupies 25–148 (RILVVEDEAV…ELVARCRALL (124 aa)). Position 83 is a 4-aspartylphosphate (D83). A DNA-binding region (ompR/PhoB-type) is located at residues 159–257 (PAVLRYEGLK…TVRGFGYRLG (99 aa)).

In terms of processing, phosphorylated by SphS.

Member of the two-component regulatory system SphR/SphS. Response regulator. Involved in inducible production of alkaline phosphatase in response to phosphate limitation as it is directly involved in the regulation of phoA transcription in response to phosphate limitation. Binds to two distinct sites upstream from the phoA promoter. This Synechococcus elongatus (strain ATCC 33912 / PCC 7942 / FACHB-805) (Anacystis nidulans R2) protein is Alkaline phosphatase synthesis transcriptional regulatory protein SphR (sphR).